The primary structure comprises 592 residues: MNFNLKQKLDLAPKKPGCYLWKNHLNEIIYIGKAKNIYKRVHQYFNGPKDLKTSKLVNEIFYVEFIEVNNENEALLLEANLIKKHKPRYNILLKDNNGYPYILMTKEKYPRLIYTRNFDPKKGKHYGPFASSEMKAYDLYNLLLKLFPLKNCFNKKGRKCEFYDLNLCMKACTHEVSEADYEVMKKKIDYFFHNGADQVLKDLKEKESIASEKFDFEQAKKYLDLQKAINLIFDKQIINLYSAKERIDVLAYQIKENVICIVLFSYVSSQLVSKNTICDFYYGEEQEVITSYLSQYYKDNIKPKILYASLDQANATLLKDSLGIEIINPTSGKMNEIMSLALQNVTNELSQKYDSLVKKEQRINLALDQLKKLIKVDKLNHLEVYDNSNLFNTDKVSAMIVFENNQFNKKKYRKYKIKDQQALGDYHYMYEVIYRRLYQALKNNFVDLPDLIILDGGKHQVLAAKKAIVDLQIDKKINLIGLAKNNKHQTDKIVTFDLDEISLDKSSALYFFLANLQEEVHKFAISFFRKTKAKSLYDSILDQIKGLGKKRKQQLIEHFKTIDEIKKASIASLSQVLPIEIAKKLKQKLDQS.

The GIY-YIG domain occupies 14-91; sequence KKPGCYLWKN…IKKHKPRYNI (78 aa). The 36-residue stretch at 197 to 232 folds into the UVR domain; it reads DQVLKDLKEKESIASEKFDFEQAKKYLDLQKAINLI.

The protein belongs to the UvrC family. In terms of assembly, interacts with UvrB in an incision complex.

The protein resides in the cytoplasm. The UvrABC repair system catalyzes the recognition and processing of DNA lesions. UvrC both incises the 5' and 3' sides of the lesion. The N-terminal half is responsible for the 3' incision and the C-terminal half is responsible for the 5' incision. This is UvrABC system protein C from Mycoplasmoides gallisepticum (strain R(low / passage 15 / clone 2)) (Mycoplasma gallisepticum).